The chain runs to 289 residues: Thiosulfate sulfurtransferase (289 aa).

A Rhodanese 1 domain is found at 24–142; the sequence is VGAGLRVLDA…WVKEGHPVTA (119 aa). The hinge stretch occupies residues 143–158; sequence EPSQPAEAVFKAKLDK. A Rhodanese 2 domain is found at 172-284; that stretch reads GSKKFQVVDS…WFHRAPPQYK (113 aa). Substrate is bound at residue Arg-186. The active-site Cysteine persulfide intermediate is Cys-244. A substrate-binding site is contributed by Lys-246.

In terms of assembly, monomer. Expressed in numerous tissues.

It is found in the mitochondrion matrix. The enzyme catalyses thiosulfate + hydrogen cyanide = thiocyanate + sulfite + 2 H(+). Functionally, together with MRPL18, acts as a mitochondrial import factor for the cytosolic 5S rRNA. Only the nascent unfolded cytoplasmic form is able to bind to the 5S rRNA. Formation of iron-sulfur complexes and cyanide detoxification. The protein is Thiosulfate sulfurtransferase (TST) of Gallus gallus (Chicken).